Consider the following 285-residue polypeptide: NADPH-dependent 7-cyano-7-deazaguanine reductase (285 aa).

A substrate-binding site is contributed by 91 to 93 (IES). 93–94 (SK) lines the NADPH pocket. The active-site Thioimide intermediate is the cysteine 193. Catalysis depends on aspartate 200, which acts as the Proton donor. 232-233 (HE) provides a ligand contact to substrate. 261–262 (RG) contacts NADPH.

This sequence belongs to the GTP cyclohydrolase I family. QueF type 2 subfamily. Homodimer.

The protein localises to the cytoplasm. The enzyme catalyses 7-aminomethyl-7-carbaguanine + 2 NADP(+) = 7-cyano-7-deazaguanine + 2 NADPH + 3 H(+). Its pathway is tRNA modification; tRNA-queuosine biosynthesis. Its function is as follows. Catalyzes the NADPH-dependent reduction of 7-cyano-7-deazaguanine (preQ0) to 7-aminomethyl-7-deazaguanine (preQ1). The chain is NADPH-dependent 7-cyano-7-deazaguanine reductase from Shewanella baltica (strain OS223).